Reading from the N-terminus, the 388-residue chain is Succinate--CoA ligase [ADP-forming] subunit beta (388 aa).

Residues 9 to 244 (KQLFAEYGLP…PSQEDEREAH (236 aa)) enclose the ATP-grasp domain. ATP-binding positions include lysine 46, 53-55 (GRG), glutamate 99, threonine 102, and glutamate 107. Residues asparagine 199 and aspartate 213 each coordinate Mg(2+). Substrate is bound by residues asparagine 264 and 321–323 (GIV).

The protein belongs to the succinate/malate CoA ligase beta subunit family. As to quaternary structure, heterotetramer of two alpha and two beta subunits. Mg(2+) is required as a cofactor.

The enzyme catalyses succinate + ATP + CoA = succinyl-CoA + ADP + phosphate. It carries out the reaction GTP + succinate + CoA = succinyl-CoA + GDP + phosphate. Its pathway is carbohydrate metabolism; tricarboxylic acid cycle; succinate from succinyl-CoA (ligase route): step 1/1. Succinyl-CoA synthetase functions in the citric acid cycle (TCA), coupling the hydrolysis of succinyl-CoA to the synthesis of either ATP or GTP and thus represents the only step of substrate-level phosphorylation in the TCA. The beta subunit provides nucleotide specificity of the enzyme and binds the substrate succinate, while the binding sites for coenzyme A and phosphate are found in the alpha subunit. In Colwellia psychrerythraea (strain 34H / ATCC BAA-681) (Vibrio psychroerythus), this protein is Succinate--CoA ligase [ADP-forming] subunit beta.